A 463-amino-acid polypeptide reads, in one-letter code: Interleukin enhancer-binding factor 2 (463 aa).

Asymmetric dimethylarginine; alternate is present on Arg-94. Arg-94 is modified (omega-N-methylarginine; alternate). One can recognise a DZF domain in the interval 108–444 (RHILAYDWLA…PEKKEGEEEE (337 aa)). Arg-145 is modified (omega-N-methylarginine). Lys-166 participates in a covalent cross-link: Glycyl lysine isopeptide (Lys-Gly) (interchain with G-Cter in ubiquitin). A phosphoserine mark is found at Ser-173 and Ser-189. Glycyl lysine isopeptide (Lys-Gly) (interchain with G-Cter in SUMO2) cross-links involve residues Lys-259 and Lys-437. A disordered region spans residues 424–463 (VTPSEKAYEKPPEKKEGEEEEENTEEPPQGEEEESMETQE). A compositionally biased stretch (basic and acidic residues) spans 429-440 (KAYEKPPEKKEG). Acidic residues predominate over residues 441–463 (EEEEENTEEPPQGEEEESMETQE). Position 461 is a phosphothreonine (Thr-461).

As to quaternary structure, forms heterodimers with ILF3. ILF2-ILF3 heterodimers may also bind to PRKDC/XRCC7: this may stabilize the interaction of PRKDC/XRCC7 and the heterodimeric complex of G22P1/KU70 and XRCC5/KU80. Forms a complex with ILF3, YLPM1, KHDRBS1, RBMX, NCOA5 and PPP1CA. Identified in a IGF2BP1-dependent mRNP granule complex containing untranslated mRNAs. Interacts with IGF2BP1. Interacts with CRBN; this interaction promotes ubiquitination and subsequent degradation of ILF2. Ubiquitinated at Lys-166 by CRBN with polyubiquitin chains by the CUL4-RING E3 ligase (CRL4-CRBN) and then degraded by the proteasome.

It localises to the nucleus. It is found in the nucleolus. The protein resides in the cytoplasm. Functionally, chromatin-interacting protein that forms a stable heterodimer with interleukin enhancer-binding factor 3/ILF3 and plays a role in several biological processes including transcription, innate immunity or cell growth. Essential for the efficient reshuttling of ILF3 (isoform 1 and isoform 2) into the nucleus. Together with ILF3, forms an RNA-binding complex that is required for mitotic progression and cytokinesis by regulating the expression of a cluster of mitotic genes. Mechanistically, competes with STAU1/STAU2-mediated mRNA decay. Plays also a role in the inhibition of various viruses including Japanese encephalitis virus or enterovirus 71. The chain is Interleukin enhancer-binding factor 2 (Ilf2) from Rattus norvegicus (Rat).